We begin with the raw amino-acid sequence, 1423 residues long: Serum albumin SDS-1 (1423 aa).

Positions 1–23 are cleaved as a signal peptide; it reads MGKAMLKLCITLMVLVFSGTAES. A propeptide spanning residues 24-29 is cleaved from the precursor; that stretch reads KGVMRR. 7 consecutive Albumin domains span residues 29–230, 231–426, 427–608, 609–811, 812–1031, 1032–1226, and 1227–1422; these read REDE…EDFK, HKLT…EFKS, EVEK…SDFK, MDVE…SQAR, QEAL…HTIH, MEIR…AIEK, and VIKD…AIKS. H36 contacts Cu cation. 16 disulfide bridges follow: C42–C88, C87–C96, C109–C125, C124–C135, C167–C212, C211–C221, C244–C290, C289–C298, C311–C327, C326–C337, C363–C408, C407–C416, C439–C485, C484–C493, C506–C522, and C521–C532. An N-linked (GlcNAc...) asparagine glycan is attached at N490. N541 carries an N-linked (GlcNAc...) asparagine glycan. 11 cysteine pairs are disulfide-bonded: C556–C601, C622–C668, C667–C676, C689–C705, C704–C715, C747–C792, C791–C802, C825–C871, C870–C879, C892–C907, and C906–C947. N652 carries N-linked (GlcNAc...) asparagine glycosylation. N754 carries N-linked (GlcNAc...) asparagine glycosylation. 2 N-linked (GlcNAc...) asparagine glycosylation sites follow: N908 and N911. The segment at 910-936 is disordered; it reads SNTSTTTSTTTSTTTSTTTSTTTSTTS. A run of 7 repeats spans residues 913–916, 917–920, 921–924, 925–928, 929–932, 933–935, and 936–939. The interval 913-939 is 7 X 4 AA tandem repeats of S-T-T-T; sequence STTTSTTTSTTTSTTTSTTTSTTSTTT. N954 carries an N-linked (GlcNAc...) asparagine glycan. Intrachain disulfides connect C969-C1014, C1013-C1022, C1045-C1091, C1090-C1099, C1112-C1128, C1127-C1138, C1163-C1208, and C1207-C1216. N-linked (GlcNAc...) asparagine glycosylation occurs at N1070. N1236 is a glycosylation site (N-linked (GlcNAc...) asparagine). 6 cysteine pairs are disulfide-bonded: C1239–C1285, C1284–C1291, C1304–C1320, C1319–C1330, C1359–C1404, and C1403–C1412.

Belongs to the ALB/AFP/VDB family. In terms of tissue distribution, plasma.

It is found in the secreted. In terms of biological role, serum albumin, the main protein of plasma, has a good binding capacity for water, Ca(2+), Na(+), K(+), fatty acids, hormones, bilirubin and drugs. Its main function is the regulation of the colloidal osmotic pressure of blood. The chain is Serum albumin SDS-1 (SDS-1) from Petromyzon marinus (Sea lamprey).